The primary structure comprises 95 residues: Co-chaperonin GroES (95 aa).

This sequence belongs to the GroES chaperonin family. Heptamer of 7 subunits arranged in a ring. Interacts with the chaperonin GroEL.

It is found in the cytoplasm. In terms of biological role, together with the chaperonin GroEL, plays an essential role in assisting protein folding. The GroEL-GroES system forms a nano-cage that allows encapsulation of the non-native substrate proteins and provides a physical environment optimized to promote and accelerate protein folding. GroES binds to the apical surface of the GroEL ring, thereby capping the opening of the GroEL channel. The polypeptide is Co-chaperonin GroES (Streptococcus uberis (strain ATCC BAA-854 / 0140J)).